The primary structure comprises 123 residues: Transmembrane protein 254 (123 aa).

Ala2 bears the N-acetylalanine mark. The next 3 membrane-spanning stretches (helical) occupy residues 15-35 (LFWFTVITLSFGYYTWVVFWP), 61-81 (LCNGYWLAWLIHVGESLYAIV), and 95-115 (LLWFLQTFFFGIASLTILIAY).

It is found in the membrane. The sequence is that of Transmembrane protein 254 (TMEM254) from Pongo abelii (Sumatran orangutan).